Reading from the N-terminus, the 104-residue chain is NADH-quinone oxidoreductase subunit K (104 aa).

Helical transmembrane passes span Val-4–Ala-24, Val-31–Phe-51, and Leu-67–Leu-87.

It belongs to the complex I subunit 4L family. NDH-1 is composed of 14 different subunits. Subunits NuoA, H, J, K, L, M, N constitute the membrane sector of the complex.

The protein localises to the cell membrane. The enzyme catalyses a quinone + NADH + 5 H(+)(in) = a quinol + NAD(+) + 4 H(+)(out). NDH-1 shuttles electrons from NADH, via FMN and iron-sulfur (Fe-S) centers, to quinones in the respiratory chain. The immediate electron acceptor for the enzyme in this species is believed to be a menaquinone. Couples the redox reaction to proton translocation (for every two electrons transferred, four hydrogen ions are translocated across the cytoplasmic membrane), and thus conserves the redox energy in a proton gradient. The polypeptide is NADH-quinone oxidoreductase subunit K (Bacillus cereus (strain AH187)).